Here is a 417-residue protein sequence, read N- to C-terminus: Exodeoxyribonuclease 7 large subunit (417 aa).

It belongs to the XseA family. In terms of assembly, heterooligomer composed of large and small subunits.

It is found in the cytoplasm. It carries out the reaction Exonucleolytic cleavage in either 5'- to 3'- or 3'- to 5'-direction to yield nucleoside 5'-phosphates.. In terms of biological role, bidirectionally degrades single-stranded DNA into large acid-insoluble oligonucleotides, which are then degraded further into small acid-soluble oligonucleotides. The sequence is that of Exodeoxyribonuclease 7 large subunit from Corynebacterium glutamicum (strain ATCC 13032 / DSM 20300 / JCM 1318 / BCRC 11384 / CCUG 27702 / LMG 3730 / NBRC 12168 / NCIMB 10025 / NRRL B-2784 / 534).